The following is a 123-amino-acid chain: Holo-[acyl-carrier-protein] synthase (123 aa).

Mg(2+) is bound by residues Asp8 and Glu56.

It belongs to the P-Pant transferase superfamily. AcpS family. The cofactor is Mg(2+).

It is found in the cytoplasm. The enzyme catalyses apo-[ACP] + CoA = holo-[ACP] + adenosine 3',5'-bisphosphate + H(+). Functionally, transfers the 4'-phosphopantetheine moiety from coenzyme A to a Ser of acyl-carrier-protein. This Clostridium botulinum (strain Alaska E43 / Type E3) protein is Holo-[acyl-carrier-protein] synthase.